The primary structure comprises 521 residues: CD166 antigen (521 aa).

Residues 1–465 (GSPVFIAFRS…NREQVNHRAT (465 aa)) lie on the Extracellular side of the membrane. 7 N-linked (GlcNAc...) asparagine glycosylation sites follow: Asn33, Asn105, Asn244, Asn299, Asn395, Asn418, and Asn437. The 110-residue stretch at 63-172 (PTIVKVFKQP…YGPSGQKTVQ (110 aa)) folds into the Ig-like V-type 2 domain. 4 disulfides stabilise this stretch: Cys95–Cys158, Cys208–Cys251, Cys292–Cys330, and Cys373–Cys423. Ig-like C2-type domains are found at residues 183–266 (PTEQ…TAIT), 271–347 (DLSL…ESLT), and 354–439 (PQIK…LNVS). A helical transmembrane segment spans residues 466-487 (LIVGIVLRLLHGALVAGVVYWL). The Cytoplasmic portion of the chain corresponds to 488 to 521 (YVKKSKTASKHVNKDLGNLEENKKLEQNNHRTEA). Residues 500–521 (NKDLGNLEENKKLEQNNHRTEA) are disordered. Over residues 507-521 (EENKKLEQNNHRTEA) the composition is skewed to basic and acidic residues.

As to quaternary structure, homodimer. Interacts (via extracellular domain) with CD6 (via extracellular domain). Homodimerization and interaction with CD6 involve the same region and cannot occur simultaneously. The affinity for CD6 is much higher than the affinity for self-association. Interacts (via glycosylated extracellular domain) with LGALS1 and LGALS3. Interaction with LGALS1 or LGALS3 inhibits interaction with CD6. Glycosylated.

It is found in the cell membrane. The protein resides in the cell projection. The protein localises to the axon. Its subcellular location is the dendrite. In terms of biological role, cell adhesion molecule that mediates both heterotypic cell-cell contacts via its interaction with CD6, as well as homotypic cell-cell contacts. Promotes T-cell activation and proliferation via its interactions with CD6. Contributes to the formation and maturation of the immunological synapse via its interactions with CD6. Mediates homotypic interactions with cells that express ALCAM. Mediates attachment of dendritic cells onto endothelial cells via homotypic interaction. Inhibits endothelial cell migration and promotes endothelial tube formation via homotypic interactions. Required for normal organization of the lymph vessel network. Required for normal hematopoietic stem cell engraftment in the bone marrow. Plays a role in hematopoiesis; required for normal numbers of hematopoietic stem cells in bone marrow. Promotes in vitro osteoblast proliferation and differentiation. Promotes neurite extension, axon growth and axon guidance; axons grow preferentially on surfaces that contain ALCAM. Mediates outgrowth and pathfinding for retinal ganglion cell axons. This chain is CD166 antigen (ALCAM), found in Canis lupus familiaris (Dog).